Consider the following 247-residue polypeptide: Putative ankyrin repeat protein RBE_1110 (247 aa).

ANK repeat units follow at residues 105–135 and 139–171; these read QNKD…CIDY and EGHN…KLIT.

This chain is Putative ankyrin repeat protein RBE_1110, found in Rickettsia bellii (strain RML369-C).